The following is a 288-amino-acid chain: MEIKLEQLGYCYQKNSPFEKRALLDVNVSFDSGSYSAIIGHTGSGKSTLLQHLNALLMPTEGKITVGDREIVAGVKQKKLRDLRKKVGIVFQFPEAQLFEETVEKDICFGPMNFGVSEEDAKLRAKKVIYEVGLTEEILSRSPFELSGGQMRRVAIAGVLAMDPEVLVLDEPTAGLDPHGREEIMEMFYNLHKEKGLTTVLVTHSMEDAARYAEKIVLMKAGTVLQIGTPREVFAKPDELVDLGLSVPDVVRFQGLFERKFDVKLTKTCLTIDELTTEMAPYLAKGGA.

An ABC transporter domain is found at Ile-3–Ser-246. Gly-40 to Ser-47 lines the ATP pocket.

It belongs to the ABC transporter superfamily. Energy-coupling factor EcfA family. Forms a stable energy-coupling factor (ECF) transporter complex composed of 2 membrane-embedded substrate-binding proteins (S component), 2 ATP-binding proteins (A component) and 2 transmembrane proteins (T component).

The protein localises to the cell membrane. Functionally, ATP-binding (A) component of a common energy-coupling factor (ECF) ABC-transporter complex. Unlike classic ABC transporters this ECF transporter provides the energy necessary to transport a number of different substrates. The protein is Energy-coupling factor transporter ATP-binding protein EcfA2 of Listeria monocytogenes serotype 4b (strain F2365).